A 212-amino-acid polypeptide reads, in one-letter code: Nascent polypeptide-associated complex subunit alpha-like protein 4 (212 aa).

Residues 25–35 show a composition bias toward basic and acidic residues; it reads QKENDVVVEDV. A disordered region spans residues 25–74; sequence QKENDVVVEDVKDGDEDDDDVDDDDDEIADGAGENEASKQSRSEKKSRKA. Acidic residues predominate over residues 36 to 53; the sequence is KDGDEDDDDVDDDDDEIA. The NAC-A/B domain occupies 65–130; that stretch reads SRSEKKSRKA…AKIDDMSSQL (66 aa). One can recognise a UBA domain in the interval 173–210; the sequence is VEAKDIDLVMTQAGVSRPKAVKALKESNGDIVSAIMEL.

The protein belongs to the NAC-alpha family.

Its function is as follows. May promote appropriate targeting of ribosome-nascent polypeptide complexes. The polypeptide is Nascent polypeptide-associated complex subunit alpha-like protein 4 (Arabidopsis thaliana (Mouse-ear cress)).